We begin with the raw amino-acid sequence, 88 residues long: MVKLRLQRTGTKHDPHYRIVAADSRSPRDGKFVDIVGHYHPAQIKEQTTFNKEKILTWLKNGAQPTGTVLNLFKNAGIWAEYKTTLKK.

Belongs to the bacterial ribosomal protein bS16 family.

In Leptospira interrogans serogroup Icterohaemorrhagiae serovar Lai (strain 56601), this protein is Small ribosomal subunit protein bS16.